A 176-amino-acid chain; its full sequence is ATP synthase subunit b, chloroplastic (176 aa).

Residues 19-39 (LDLLETNIINIFILIIILIYL) traverse the membrane as a helical segment.

It belongs to the ATPase B chain family. As to quaternary structure, F-type ATPases have 2 components, F(1) - the catalytic core - and F(0) - the membrane proton channel. F(1) has five subunits: alpha(3), beta(3), gamma(1), delta(1), epsilon(1). F(0) has four main subunits: a(1), b(1), b'(1) and c(10-14). The alpha and beta chains form an alternating ring which encloses part of the gamma chain. F(1) is attached to F(0) by a central stalk formed by the gamma and epsilon chains, while a peripheral stalk is formed by the delta, b and b' chains.

Its subcellular location is the plastid. The protein localises to the chloroplast thylakoid membrane. Functionally, f(1)F(0) ATP synthase produces ATP from ADP in the presence of a proton or sodium gradient. F-type ATPases consist of two structural domains, F(1) containing the extramembraneous catalytic core and F(0) containing the membrane proton channel, linked together by a central stalk and a peripheral stalk. During catalysis, ATP synthesis in the catalytic domain of F(1) is coupled via a rotary mechanism of the central stalk subunits to proton translocation. In terms of biological role, component of the F(0) channel, it forms part of the peripheral stalk, linking F(1) to F(0). This is ATP synthase subunit b, chloroplastic from Galdieria sulphuraria (Red alga).